Here is a 201-residue protein sequence, read N- to C-terminus: MRLERLAVNKIKVFLTFDDLKERGITKDELWQDIPKVHDLFRDMMLEADDELGFKADGPIAVEVFALPAQGMVIIVTKGHQESDFDEDGLEDGYIEMQVTLDESDEVFYEFADIEDVISLVPRLVTLGMTGGTLYSYQGRYYISFTDLDLDGIDEESLIALLAEYGYPSTISTYRVAEYGSLIIANDACIKLYQSFFKART.

Belongs to the MecA family. As to quaternary structure, homodimer.

Enables the recognition and targeting of unfolded and aggregated proteins to the ClpC protease or to other proteins involved in proteolysis. Acts negatively in the development of competence by binding ComK and recruiting it to the ClpCP protease. When overexpressed, inhibits sporulation. Also involved in Spx degradation by ClpC. The protein is Adapter protein MecA 1 (mecA1) of Halalkalibacterium halodurans (strain ATCC BAA-125 / DSM 18197 / FERM 7344 / JCM 9153 / C-125) (Bacillus halodurans).